The chain runs to 133 residues: ATP synthase epsilon chain (133 aa).

This sequence belongs to the ATPase epsilon chain family. In terms of assembly, F-type ATPases have 2 components, CF(1) - the catalytic core - and CF(0) - the membrane proton channel. CF(1) has five subunits: alpha(3), beta(3), gamma(1), delta(1), epsilon(1). CF(0) has three main subunits: a, b and c.

It is found in the cell inner membrane. Produces ATP from ADP in the presence of a proton gradient across the membrane. This chain is ATP synthase epsilon chain, found in Maricaulis maris (strain MCS10) (Caulobacter maris).